The following is a 374-amino-acid chain: Tomoregulin-2 (374 aa).

Positions 1-40 (MVLWESPRQCSSWTLCEGFCWLLLLPVMLLIVARPVKLAA) are cleaved as a signal peptide. At 41-320 (FPTSLSDCQT…VPGPVRFQYV (280 aa)) the chain is on the extracellular side. Kazal-like domains follow at residues 90–137 (VCQF…SCAT) and 181–229 (VCNI…RCQD). Intrachain disulfides connect Cys91-Cys121, Cys95-Cys114, Cys103-Cys135, Cys182-Cys213, Cys186-Cys206, and Cys195-Cys227. The N-linked (GlcNAc...) (complex) asparagine; atypical glycan is linked to Asn204. N-linked (GlcNAc...) asparagine glycosylation is present at Asn230. One can recognise an EGF-like domain in the interval 261–301 (HHIPCPEHYNGFCMHGKCEHSINMQEPSCRCDAGYTGQHCE). Intrachain disulfides connect Cys265/Cys278, Cys273/Cys289, and Cys291/Cys300. The interval 303-320 (KDYSVLYVVPGPVRFQYV) is required for shedding. The helical transmembrane segment at 321 to 341 (LIAAVIGTIQIAVICVVVLCI) threads the bilayer. Residues 342–374 (TRKCPRSNRIHRQKQNTGHYSSDNTTRASTRLI) lie on the Cytoplasmic side of the membrane. Positions 353-374 (RQKQNTGHYSSDNTTRASTRLI) are disordered. Residues 356–374 (QNTGHYSSDNTTRASTRLI) show a composition bias toward polar residues.

This sequence belongs to the tomoregulin family. O-glycosylated; contains chondroitin sulfate glycosaminoglycans. Post-translationally, a soluble form (TMEFF2-ECD) is produced by proteolytic shedding. This shedding can be induced by phorbol ester or pro-inflammatory cytokines such as TNFalpha, and is mediated by ADAM17. In terms of tissue distribution, highly expressed in adult and fetal brain, spinal cord and prostate. Expressed in all brain regions except the pituitary gland, with highest levels in amygdala and corpus callosum. Expressed in the pericryptal myofibroblasts and other stromal cells of normal colonic mucosa. Expressed in prostate carcinoma. Down-regulated in colorectal cancer. Present in Alzheimer disease plaques (at protein level). Isoform 3 is expressed weakly in testis and at high levels in normal and cancerous prostate.

Its subcellular location is the membrane. The protein localises to the secreted. Its function is as follows. May be a survival factor for hippocampal and mesencephalic neurons. The shedded form up-regulates cancer cell proliferation, probably by promoting ERK1/2 phosphorylation. This chain is Tomoregulin-2 (TMEFF2), found in Homo sapiens (Human).